A 131-amino-acid chain; its full sequence is Large ribosomal subunit protein eL32 (131 aa).

Residues 39–77 (LGEKWRRPKGRHSKMRRKLKSKPKMPNPGYGSPKKVRGL) are disordered. Over residues 44–61 (RRPKGRHSKMRRKLKSKP) the composition is skewed to basic residues.

The protein belongs to the eukaryotic ribosomal protein eL32 family.

This Methanopyrus kandleri (strain AV19 / DSM 6324 / JCM 9639 / NBRC 100938) protein is Large ribosomal subunit protein eL32 (rpl32).